Here is a 196-residue protein sequence, read N- to C-terminus: Serine/arginine-rich splicing factor RSZ22A (196 aa).

The 70-residue stretch at 2 to 71 folds into the RRM domain; it reads SRVYVGNLDP…NGWRVEQSHN (70 aa). Ser-48 carries the phosphoserine modification. Over residues 58 to 70 the composition is skewed to basic and acidic residues; sequence VDGKNGWRVEQSH. The disordered stretch occupies residues 58–196; sequence VDGKNGWRVE…GLKDVRRSRS (139 aa). The span at 72-87 shows a compositional bias: gly residues; it reads RGGGGGRGGGRGGGDG. Residues 88–100 show a composition bias toward basic and acidic residues; the sequence is GRGRGGSDLKCYE. Residues 96-113 form a CCHC-type zinc finger; sequence LKCYECGESGHFARECRS. Basic residues predominate over residues 119–135; it reads GRRRSRSRSRSPPRYRK. 7 positions are modified to phosphoserine: Ser-136, Ser-144, Ser-146, Ser-151, Ser-159, Ser-170, and Ser-196. Residues 139 to 149 are compositionally biased toward low complexity; sequence YGGRRSYSPRA.

Belongs to the splicing factor SR family. RSZ subfamily. In terms of assembly, component of the spliceosome. Extensively phosphorylated on serine residues in the RS domain.

Its subcellular location is the nucleus. Probably involved in intron recognition and spliceosome assembly. The polypeptide is Serine/arginine-rich splicing factor RSZ22A (RSZ22A) (Arabidopsis thaliana (Mouse-ear cress)).